Consider the following 122-residue polypeptide: Small ribosomal subunit protein uS13 (122 aa).

Positions 91-122 (RHRRGLPVHGQRTKTNARTRKGPKRTVAGKKK) are disordered.

It belongs to the universal ribosomal protein uS13 family. As to quaternary structure, part of the 30S ribosomal subunit. Forms a loose heterodimer with protein S19. Forms two bridges to the 50S subunit in the 70S ribosome.

Functionally, located at the top of the head of the 30S subunit, it contacts several helices of the 16S rRNA. In the 70S ribosome it contacts the 23S rRNA (bridge B1a) and protein L5 of the 50S subunit (bridge B1b), connecting the 2 subunits; these bridges are implicated in subunit movement. Contacts the tRNAs in the A and P-sites. In Kocuria rhizophila (strain ATCC 9341 / DSM 348 / NBRC 103217 / DC2201), this protein is Small ribosomal subunit protein uS13.